Reading from the N-terminus, the 84-residue chain is uncharacterized protein (84 aa).

This is an uncharacterized protein from Micrococcus luteus (Micrococcus lysodeikticus).